A 196-amino-acid chain; its full sequence is RNA pyrophosphohydrolase (196 aa).

A Nudix hydrolase domain is found at 6–149; it reads GYRPNVGIVI…KRDVYRKVMK (144 aa). Residues 38–59 carry the Nudix box motif; sequence GGINDNESAEQAMYRELHEEVG. The interval 166–196 is disordered; the sequence is SREANSQSNSANKKYSQTKYTKRHFYKSKGQ. Polar residues predominate over residues 167 to 184; it reads REANSQSNSANKKYSQTK. A compositionally biased stretch (basic residues) spans 185–196; that stretch reads YTKRHFYKSKGQ.

This sequence belongs to the Nudix hydrolase family. RppH subfamily. A divalent metal cation is required as a cofactor.

Functionally, accelerates the degradation of transcripts by removing pyrophosphate from the 5'-end of triphosphorylated RNA, leading to a more labile monophosphorylated state that can stimulate subsequent ribonuclease cleavage. The polypeptide is RNA pyrophosphohydrolase (Haemophilus influenzae (strain 86-028NP)).